A 208-amino-acid chain; its full sequence is Capsid protein (208 aa).

The span at 1-12 (MPPKRQNTETRK) shows a compositional bias: basic and acidic residues. The disordered stretch occupies residues 1-23 (MPPKRQNTETRKARQNRARRSRQ). Positions 13 to 22 (ARQNRARRSR) are enriched in basic residues.

Its subcellular location is the virion. In terms of biological role, capsid protein self-assembles to form a quasi spherical capsid, about 25-35 nm. The sequence is that of Capsid protein from Pelargonium zonate spot virus (isolate Tomato/Italy/1982) (PZSV).